We begin with the raw amino-acid sequence, 202 residues long: uncharacterized protein (202 aa).

The Cytoplasmic portion of the chain corresponds to 1–6 (MITDFL). A helical; Signal-anchor for type II membrane protein membrane pass occupies residues 7–23 (LAFSILAVSTTLGVSNL). At 24–202 (NKQCRDLLQC…KNGKTRGHSG (179 aa)) the chain is on the extracellular side. Residue Asn-53 is glycosylated (N-linked (GlcNAc...) asparagine).

The protein localises to the membrane. This is an uncharacterized protein from Caenorhabditis elegans.